A 398-amino-acid chain; its full sequence is Autophagy-related protein 39 (398 aa).

Residues 8 to 11 carry the ATG8-binding motif; the sequence is WNLV. The interval 15–50 is disordered; it reads RLRKGREGEEQSSKSEISLDSLHESSFAGEDDEDFD. The ATG11-binding motif lies at 52–59; that stretch reads DVLSNTSS. Residues 148–164 form a helical membrane-spanning segment; it reads VIMLSSLLSMTFSYLAL.

Interacts with ATG8 and ATG11.

It localises to the endoplasmic reticulum membrane. It is found in the preautophagosomal structure membrane. Its function is as follows. Acts as a receptor for reticulophagy and nucleophagy. Directs autophagic sequestration of double-membrane vesicles derived from the nuclear envelope and perinuclear endoplasmic reticulum (pnER) into autophagosomes. Is not required for the cytoplasm-to-vacuole targeting pathway, mitophagy, pexophagy, and non-selective autophagy. This is Autophagy-related protein 39 from Saccharomyces cerevisiae (strain ATCC 204508 / S288c) (Baker's yeast).